Consider the following 517-residue polypeptide: Nicotine N-demethylase CYP82E4 (517 aa).

A helical membrane pass occupies residues Leu2–Trp22. Lys254 is covalently cross-linked (Glycyl lysine isopeptide (Lys-Gly) (interchain with G-Cter in ubiquitin)). A heme-binding site is contributed by Cys457.

The protein belongs to the cytochrome P450 family. CYP82E2 subfamily. The cofactor is heme. As to expression, expressed in leaves.

It localises to the membrane. The enzyme catalyses (S)-nicotine + reduced [NADPH--hemoprotein reductase] + O2 = (S)-nornicotine + formaldehyde + oxidized [NADPH--hemoprotein reductase] + H2O + H(+). It functions in the pathway alkaloid biosynthesis; nicotine biosynthesis. Functionally, involved in the biosynthesis of pyridine alkaloid natural products, leading mainly to the production of anabasine, anatabine, nicotine and nornicotine, effective deterrents against herbivores with antiparasitic and pesticide properties (neurotoxins); nornicotine serves as the precursor in the synthesis of the carcinogen compound N'-nitrosonornicotine (NNN). Catalyzes the demethylation of nicotine to form nornicotine. The chain is Nicotine N-demethylase CYP82E4 from Nicotiana tomentosiformis (Tobacco).